The chain runs to 109 residues: UPF0122 protein Cbei_1174 (109 aa).

It belongs to the UPF0122 family.

In terms of biological role, might take part in the signal recognition particle (SRP) pathway. This is inferred from the conservation of its genetic proximity to ftsY/ffh. May be a regulatory protein. This chain is UPF0122 protein Cbei_1174, found in Clostridium beijerinckii (strain ATCC 51743 / NCIMB 8052) (Clostridium acetobutylicum).